A 247-amino-acid chain; its full sequence is ATP synthase subunit a, chloroplastic (247 aa).

5 consecutive transmembrane segments (helical) span residues 38–58 (QVLI…IVTV), 95–115 (VPFI…GALL), 134–154 (INTT…AGLS), 199–219 (LVVV…VMFL), and 220–240 (GLFT…AYIG).

Belongs to the ATPase A chain family. F-type ATPases have 2 components, CF(1) - the catalytic core - and CF(0) - the membrane proton channel. CF(1) has five subunits: alpha(3), beta(3), gamma(1), delta(1), epsilon(1). CF(0) has four main subunits: a, b, b' and c.

The protein resides in the plastid. It is found in the chloroplast thylakoid membrane. Key component of the proton channel; it plays a direct role in the translocation of protons across the membrane. This Populus alba (White poplar) protein is ATP synthase subunit a, chloroplastic.